A 562-amino-acid chain; its full sequence is MLTKLRISKLVSYTLPRRIFQRRFLVTNNTAEESPIVAAESPELPSWIKDFLSNKPSSSSSSVSKDDEDFVIPSLANWVESQKFSRQQVSEGNVVKKPVEDIDKVCDFLNKKDTSHEDVVKELSKCDVVVTESLVLQVLRRFSNGWNQAYGFFIWANSQTGYVHSGHTYNAMVDVLGKCRNFDLMWELVNEMNKNEESKLVTLDTMSKVMRRLAKSGKYNKAVDAFLEMEKSYGVKTDTIAMNSLMDALVKENSIEHAHEVFLKLFDTIKPDARTFNILIHGFCKARKFDDARAMMDLMKVTEFTPDVVTYTSFVEAYCKEGDFRRVNEMLEEMRENGCNPNVVTYTIVMHSLGKSKQVAEALGVYEKMKEDGCVPDAKFYSSLIHILSKTGRFKDAAEIFEDMTNQGVRRDVLVYNTMISAALHHSRDEMALRLLKRMEDEEGESCSPNVETYAPLLKMCCHKKKMKLLGILLHHMVKNDVSIDVSTYILLIRGLCMSGKVEEACLFFEEAVRKGMVPRDSTCKMLVDELEKKNMAEAKLKIQSLVQSKTMIDSHSPLSVS.

The transit peptide at 1–31 (MLTKLRISKLVSYTLPRRIFQRRFLVTNNTA) directs the protein to the mitochondrion. PPR repeat units follow at residues 165–199 (SGHT…EESK), 202–232 (TLDT…MEKS), 238–268 (DTIA…LFDT), 272–306 (DART…EFTP), 307–341 (DVVT…GCNP), 342–376 (NVVT…GCVP), 377–411 (DAKF…GVRR), 412–446 (DVLV…EGES), 450–484 (NVET…DVSI), and 485–519 (DVST…GMVP).

Belongs to the PPR family. P subfamily.

The protein localises to the mitochondrion. The sequence is that of Pentatricopeptide repeat-containing protein At3g22670, mitochondrial from Arabidopsis thaliana (Mouse-ear cress).